A 258-amino-acid chain; its full sequence is Type III pantothenate kinase (258 aa).

An ATP-binding site is contributed by 9 to 16; sequence DIGNTSVN. 110–113 lines the substrate pocket; sequence GADR. Catalysis depends on Asp-112, which acts as the Proton acceptor. Asp-132 contributes to the K(+) binding site. Thr-135 lines the ATP pocket. Thr-187 provides a ligand contact to substrate.

Belongs to the type III pantothenate kinase family. Homodimer. NH4(+) is required as a cofactor. The cofactor is K(+).

It is found in the cytoplasm. It carries out the reaction (R)-pantothenate + ATP = (R)-4'-phosphopantothenate + ADP + H(+). The protein operates within cofactor biosynthesis; coenzyme A biosynthesis; CoA from (R)-pantothenate: step 1/5. Catalyzes the phosphorylation of pantothenate (Pan), the first step in CoA biosynthesis. The chain is Type III pantothenate kinase from Dehalococcoides mccartyi (strain ATCC BAA-2266 / KCTC 15142 / 195) (Dehalococcoides ethenogenes (strain 195)).